The primary structure comprises 309 residues: Foldase protein PrsA (309 aa).

A signal peptide spans M1–A22. A lipid anchor (N-palmitoyl cysteine) is attached at C23. C23 carries S-diacylglycerol cysteine lipidation. A PpiC domain is found at T146–D241.

The protein belongs to the PrsA family.

It localises to the cell membrane. The catalysed reaction is [protein]-peptidylproline (omega=180) = [protein]-peptidylproline (omega=0). Its function is as follows. Plays a major role in protein secretion by helping the post-translocational extracellular folding of several secreted proteins. The protein is Foldase protein PrsA of Streptococcus agalactiae serotype V (strain ATCC BAA-611 / 2603 V/R).